The sequence spans 102 residues: Glutaredoxin (102 aa).

The region spanning 3-102 (MTKTKELVSS…VPLLTEAGAV (100 aa)) is the Glutaredoxin domain. Cysteines 23 and 26 form a disulfide.

This sequence belongs to the glutaredoxin family. CPYC subfamily.

The protein localises to the cytoplasm. Has a glutathione-disulfide oxidoreductase activity in the presence of NADPH and glutathione reductase. Reduces low molecular weight disulfides and proteins. This is Glutaredoxin from Ricinus communis (Castor bean).